Here is a 314-residue protein sequence, read N- to C-terminus: Transcriptional activator RhrA (314 aa).

In terms of domain architecture, HTH araC/xylS-type spans 210–310 (ASIKMRVEQN…GVRPSDLRRL (101 aa)). DNA-binding regions (H-T-H motif) lie at residues 228 to 249 (TDVAEAERITPRAIQKFFSREG) and 277 to 300 (ISQIAYNVGFNDLSYFNRTFRSRY).

Its function is as follows. Transcriptional activator of the rhizobactin regulon. This Rhizobium meliloti (strain 1021) (Ensifer meliloti) protein is Transcriptional activator RhrA (rhrA).